A 315-amino-acid polypeptide reads, in one-letter code: 4-hydroxy-3-methylbut-2-enyl diphosphate reductase (315 aa).

Cys-12 provides a ligand contact to [4Fe-4S] cluster. His-41 and His-74 together coordinate (2E)-4-hydroxy-3-methylbut-2-enyl diphosphate. Dimethylallyl diphosphate-binding residues include His-41 and His-74. Isopentenyl diphosphate-binding residues include His-41 and His-74. [4Fe-4S] cluster is bound at residue Cys-96. A (2E)-4-hydroxy-3-methylbut-2-enyl diphosphate-binding site is contributed by His-124. Residue His-124 coordinates dimethylallyl diphosphate. Isopentenyl diphosphate is bound at residue His-124. The active-site Proton donor is the Glu-126. Position 168 (Thr-168) interacts with (2E)-4-hydroxy-3-methylbut-2-enyl diphosphate. Cys-198 serves as a coordination point for [4Fe-4S] cluster. (2E)-4-hydroxy-3-methylbut-2-enyl diphosphate is bound by residues Ser-226, Ser-227, Asn-228, and Ser-270. Positions 226, 227, 228, and 270 each coordinate dimethylallyl diphosphate. Residues Ser-226, Ser-227, Asn-228, and Ser-270 each contribute to the isopentenyl diphosphate site.

Belongs to the IspH family. [4Fe-4S] cluster serves as cofactor.

The enzyme catalyses isopentenyl diphosphate + 2 oxidized [2Fe-2S]-[ferredoxin] + H2O = (2E)-4-hydroxy-3-methylbut-2-enyl diphosphate + 2 reduced [2Fe-2S]-[ferredoxin] + 2 H(+). It carries out the reaction dimethylallyl diphosphate + 2 oxidized [2Fe-2S]-[ferredoxin] + H2O = (2E)-4-hydroxy-3-methylbut-2-enyl diphosphate + 2 reduced [2Fe-2S]-[ferredoxin] + 2 H(+). It participates in isoprenoid biosynthesis; dimethylallyl diphosphate biosynthesis; dimethylallyl diphosphate from (2E)-4-hydroxy-3-methylbutenyl diphosphate: step 1/1. The protein operates within isoprenoid biosynthesis; isopentenyl diphosphate biosynthesis via DXP pathway; isopentenyl diphosphate from 1-deoxy-D-xylulose 5-phosphate: step 6/6. Functionally, catalyzes the conversion of 1-hydroxy-2-methyl-2-(E)-butenyl 4-diphosphate (HMBPP) into a mixture of isopentenyl diphosphate (IPP) and dimethylallyl diphosphate (DMAPP). Acts in the terminal step of the DOXP/MEP pathway for isoprenoid precursor biosynthesis. The chain is 4-hydroxy-3-methylbut-2-enyl diphosphate reductase from Pseudomonas fluorescens (strain SBW25).